A 236-amino-acid polypeptide reads, in one-letter code: SERTA domain-containing protein 1 (236 aa).

Residues 38 to 85 form the SERTA domain; sequence PTVASSSLFDLSVVKLHHSLRQSEPDLRHLVLVVNTLRRIQASMEPAP. A disordered region spans residues 190–211; it reads ASEGLKPGPENGPAKEEPPELD.

Interacts with the PHD-bromodomain of TIF1, TRIM28/TIF1B and p300/CBP. Interacts with E2F1 and TFDP1; modulates transactivation activity of TFDP1/E2F complexes. Also interacts with CDK4. Post-translationally, polyubiquitinated, which promotes proteasomal degradation. As to expression, detected at in testis, lung and, at lower levels, in muscle, liver, spleen, brain and heart.

Acts at E2F-responsive promoters as coregulator to integrate signals provided by PHD- and/or bromodomain-containing transcription factors. Stimulates E2F1/TFDP1 transcriptional activity. Renders the activity of cyclin D1/CDK4 resistant to the inhibitory effects of CDKN2A/p16INK4A. The polypeptide is SERTA domain-containing protein 1 (Sertad1) (Mus musculus (Mouse)).